The sequence spans 254 residues: Type III pantothenate kinase (254 aa).

6–13 (DVGNSNIV) lines the ATP pocket. Residues tyrosine 100 and 107-110 (GADR) contribute to the substrate site. The active-site Proton acceptor is aspartate 109. Aspartate 129 lines the K(+) pocket. Threonine 132 is an ATP binding site. Threonine 184 is a binding site for substrate.

It belongs to the type III pantothenate kinase family. Homodimer. NH4(+) serves as cofactor. It depends on K(+) as a cofactor.

Its subcellular location is the cytoplasm. The catalysed reaction is (R)-pantothenate + ATP = (R)-4'-phosphopantothenate + ADP + H(+). Its pathway is cofactor biosynthesis; coenzyme A biosynthesis; CoA from (R)-pantothenate: step 1/5. Catalyzes the phosphorylation of pantothenate (Pan), the first step in CoA biosynthesis. This is Type III pantothenate kinase from Pelobacter propionicus (strain DSM 2379 / NBRC 103807 / OttBd1).